The chain runs to 214 residues: Insulin-like growth factor 2 (214 aa).

A b region spans residues 48 to 79 (EVASAETLCGGELVDALQFVCEDRGFYFSRPT). Cystine bridges form between C56–C97, C68–C110, and C96–C101. The c stretch occupies residues 80–90 (SRSNSRRSQNR). The interval 91–111 (GIVEECCFRSCDLNLLEQYCA) is a. The interval 112-117 (KPAKSE) is d. Residues 118–214 (RDVSATSLQI…PPTDNYVSHN (97 aa)) constitute a propeptide, e peptide.

It belongs to the insulin family.

Its subcellular location is the secreted. Its function is as follows. The insulin-like growth factors, isolated from plasma, are structurally and functionally related to insulin but have a much higher growth-promoting activity. Acts as a ligand for integrin which is required for IGF2 signaling. This chain is Insulin-like growth factor 2, found in Oncorhynchus mykiss (Rainbow trout).